A 209-amino-acid polypeptide reads, in one-letter code: Isopentenyl-diphosphate Delta-isomerase (209 aa).

Mn(2+)-binding residues include His-31 and His-38. In terms of domain architecture, Nudix hydrolase spans 36–171 (PLHLAFSVYI…RLLVSPWCRA (136 aa)). The active site involves Cys-73. Mg(2+) is bound at residue Cys-73. His-75 contributes to the Mn(2+) binding site. Glu-93 is a Mg(2+) binding site. Mn(2+) is bound by residues Glu-120 and Glu-122. Residue Glu-122 is part of the active site.

It belongs to the IPP isomerase type 1 family. The cofactor is Mg(2+). Mn(2+) serves as cofactor.

The protein localises to the cytoplasm. It catalyses the reaction isopentenyl diphosphate = dimethylallyl diphosphate. Its pathway is isoprenoid biosynthesis; dimethylallyl diphosphate biosynthesis; dimethylallyl diphosphate from isopentenyl diphosphate: step 1/1. Functionally, catalyzes the 1,3-allylic rearrangement of the homoallylic substrate isopentenyl (IPP) to its highly electrophilic allylic isomer, dimethylallyl diphosphate (DMAPP). The chain is Isopentenyl-diphosphate Delta-isomerase from Rhizobium rhizogenes (Agrobacterium rhizogenes).